Consider the following 105-residue polypeptide: Heme oxygenase (mycobilin-producing) (105 aa).

The ABM domain occupies V3–F92. Heme contacts are provided by residues R22–R26, H75, and V83–G86.

It belongs to the antibiotic biosynthesis monooxygenase family. Homodimer.

It catalyses the reaction heme b + 3 AH2 + 3 O2 + 2 H(+) = mycobilin a + Fe(2+) + 3 A + 3 H2O. The catalysed reaction is heme b + 3 AH2 + 3 O2 + 2 H(+) = mycobilin b + Fe(2+) + 3 A + 3 H2O. Catalyzes the oxidative degradation of the heme macrocyclic porphyrin ring in the presence of a suitable electron donor such as ascorbate or NADPH--cytochrome P450 reductase, with subsequent release of free iron. This is Heme oxygenase (mycobilin-producing) (mhuD) from Mycobacterium tuberculosis (strain CDC 1551 / Oshkosh).